The following is a 255-amino-acid chain: Hydroxyacylglutathione hydrolase (255 aa).

7 residues coordinate Zn(2+): histidine 56, histidine 58, aspartate 60, histidine 61, histidine 112, aspartate 129, and histidine 167.

It belongs to the metallo-beta-lactamase superfamily. Glyoxalase II family. As to quaternary structure, monomer. Requires Zn(2+) as cofactor.

It catalyses the reaction an S-(2-hydroxyacyl)glutathione + H2O = a 2-hydroxy carboxylate + glutathione + H(+). It participates in secondary metabolite metabolism; methylglyoxal degradation; (R)-lactate from methylglyoxal: step 2/2. Functionally, thiolesterase that catalyzes the hydrolysis of S-D-lactoyl-glutathione to form glutathione and D-lactic acid. This is Hydroxyacylglutathione hydrolase from Pseudomonas fluorescens (strain SBW25).